The sequence spans 474 residues: Transmembrane transporter FVEG_12640 (474 aa).

Residues 1–15 (MASPTISSMEQYTPS) are compositionally biased toward polar residues. Positions 1 to 39 (MASPTISSMEQYTPSSKDEKIVPLHGDAAGSDTEKGESR) are disordered. The next 10 helical transmembrane spans lie at 72–92 (ILAI…LCIV), 133–153 (LVGV…IVTS), 164–184 (GTCT…FSSI), 192–212 (WLTW…VVAV), 231–251 (WAPI…NIFI), 275–295 (ACLV…LVIY), 317–337 (VAYG…QHVA), 364–384 (LGIN…VPIL), 387–407 (LLGL…PALL), and 431–451 (LIMI…AVLI).

The protein belongs to the amino acid/polyamine transporter 2 family.

It localises to the membrane. In terms of biological role, transmembrane transporter; part of the Fusarium detoxification of benzoxazolinone cluster 2 (FDB2) involved in the degradation of benzoxazolinones produced by the host plant. Maize, wheat, and rye produce the 2 benzoxazinone phytoanticipins 2,4-dihy-droxy-7-methoxy-1,4-benzoxazin-3-one (DIMBOA) and 2,4-dihydroxy-1,4-benzoxazin-3-one (DIBOA) that, due to their inherent instability once released, spontaneously degrade to the more stable corresponding benzoxazolinones, 6-methoxy-2-benzoxazolinone (MBOA) and 2-benzoxazolinone (BOA), respectively. Might be involved in the transport of metabolites of benzoxazolinone degradation. In Gibberella moniliformis (strain M3125 / FGSC 7600) (Maize ear and stalk rot fungus), this protein is Transmembrane transporter FVEG_12640.